The sequence spans 264 residues: 3-methyl-2-oxobutanoate hydroxymethyltransferase (264 aa).

2 residues coordinate Mg(2+): Asp-45 and Asp-84. Residues 45-46, Asp-84, and Lys-112 each bind 3-methyl-2-oxobutanoate; that span reads DS. A Mg(2+)-binding site is contributed by Glu-114. Glu-181 (proton acceptor) is an active-site residue.

This sequence belongs to the PanB family. As to quaternary structure, homodecamer; pentamer of dimers. It depends on Mg(2+) as a cofactor.

Its subcellular location is the cytoplasm. The catalysed reaction is 3-methyl-2-oxobutanoate + (6R)-5,10-methylene-5,6,7,8-tetrahydrofolate + H2O = 2-dehydropantoate + (6S)-5,6,7,8-tetrahydrofolate. The protein operates within cofactor biosynthesis; (R)-pantothenate biosynthesis; (R)-pantoate from 3-methyl-2-oxobutanoate: step 1/2. Catalyzes the reversible reaction in which hydroxymethyl group from 5,10-methylenetetrahydrofolate is transferred onto alpha-ketoisovalerate to form ketopantoate. In Colwellia psychrerythraea (strain 34H / ATCC BAA-681) (Vibrio psychroerythus), this protein is 3-methyl-2-oxobutanoate hydroxymethyltransferase.